We begin with the raw amino-acid sequence, 483 residues long: Aspartyl/glutamyl-tRNA(Asn/Gln) amidotransferase subunit B (483 aa).

The protein belongs to the GatB/GatE family. GatB subfamily. In terms of assembly, heterotrimer of A, B and C subunits.

The catalysed reaction is L-glutamyl-tRNA(Gln) + L-glutamine + ATP + H2O = L-glutaminyl-tRNA(Gln) + L-glutamate + ADP + phosphate + H(+). The enzyme catalyses L-aspartyl-tRNA(Asn) + L-glutamine + ATP + H2O = L-asparaginyl-tRNA(Asn) + L-glutamate + ADP + phosphate + 2 H(+). Allows the formation of correctly charged Asn-tRNA(Asn) or Gln-tRNA(Gln) through the transamidation of misacylated Asp-tRNA(Asn) or Glu-tRNA(Gln) in organisms which lack either or both of asparaginyl-tRNA or glutaminyl-tRNA synthetases. The reaction takes place in the presence of glutamine and ATP through an activated phospho-Asp-tRNA(Asn) or phospho-Glu-tRNA(Gln). The sequence is that of Aspartyl/glutamyl-tRNA(Asn/Gln) amidotransferase subunit B from Thermomicrobium roseum (strain ATCC 27502 / DSM 5159 / P-2).